Consider the following 270-residue polypeptide: Putative phosphoenolpyruvate synthase regulatory protein (270 aa).

G150–T157 contacts ADP.

It belongs to the pyruvate, phosphate/water dikinase regulatory protein family. PSRP subfamily.

The catalysed reaction is [pyruvate, water dikinase] + ADP = [pyruvate, water dikinase]-phosphate + AMP + H(+). It catalyses the reaction [pyruvate, water dikinase]-phosphate + phosphate + H(+) = [pyruvate, water dikinase] + diphosphate. Bifunctional serine/threonine kinase and phosphorylase involved in the regulation of the phosphoenolpyruvate synthase (PEPS) by catalyzing its phosphorylation/dephosphorylation. This chain is Putative phosphoenolpyruvate synthase regulatory protein, found in Cupriavidus metallidurans (strain ATCC 43123 / DSM 2839 / NBRC 102507 / CH34) (Ralstonia metallidurans).